The sequence spans 474 residues: Cysteine--tRNA ligase (474 aa).

Cys-27 is a Zn(2+) binding site. The 'HIGH' region motif lies at 29-39 (PTVYNYIHIGN). Cys-212, His-237, and Glu-241 together coordinate Zn(2+). The 'KMSKS' region signature appears at 271–275 (KMSKS). Lys-274 is a binding site for ATP.

It belongs to the class-I aminoacyl-tRNA synthetase family. As to quaternary structure, monomer. Requires Zn(2+) as cofactor.

The protein localises to the cytoplasm. It catalyses the reaction tRNA(Cys) + L-cysteine + ATP = L-cysteinyl-tRNA(Cys) + AMP + diphosphate. The chain is Cysteine--tRNA ligase from Lactobacillus delbrueckii subsp. bulgaricus (strain ATCC BAA-365 / Lb-18).